The following is a 151-amino-acid chain: GTP-dependent dephospho-CoA kinase (151 aa).

GTP-binding residues include aspartate 30, valine 31, aspartate 49, lysine 51, and glutamate 104.

Belongs to the GTP-dependent DPCK family.

It carries out the reaction 3'-dephospho-CoA + GTP = GDP + CoA + H(+). The protein operates within cofactor biosynthesis; coenzyme A biosynthesis. Functionally, catalyzes the GTP-dependent phosphorylation of the 3'-hydroxyl group of dephosphocoenzyme A to form coenzyme A (CoA). This Cenarchaeum symbiosum (strain A) protein is GTP-dependent dephospho-CoA kinase.